The chain runs to 317 residues: Methyltransferase CPUR_05424 (317 aa).

The segment at 57–149 (DVGAGNGPYA…QLRPGGTFAC (93 aa)) is methyltransferase domain.

The protein belongs to the methyltransferase superfamily.

The protein operates within pigment biosynthesis. Functionally, methyltransferase; part of the ergochrome gene cluster responsible for the typical purple-black color of the ergot sclerotia. The ergochrome gene cluster produces several ergot pigments including the yellow ergochrome secalonic acid and its derivatives, as well as the red anthraquinones endocrocin and clavorubin. The pathway begins with the synthesis of atrochrysone thioester by the polyketide synthase (PKS) CPUR_05437. The atrochrysone carboxyl ACP thioesterase CPUR_05436 then breaks the thioester bond and releases the atrochrysone carboxylic acid from CPUR_05437. The atrochrysone carboxylic acid is then converted to atrochrysone which is further transformed into emodin anthrone. The next step is performed by the anthrone oxygenase CPUR_05434 that catalyzes the oxidation of emodinanthrone to emodin. Emodin is further modified to yield monodictyphenone via several steps involving CPUR_05427, CPUR_05428, CPUR_05429 and CPUR_05430. The short chain dehydrogenase/reductase CPUR_05418 then catalyzes the C-5 ketoreduction to give the xanthone skeleton of the monomeric units. Ergochromes formation requires further dimerization steps of different xanthone units, probably catalyzed by the cytochrome P450 monooxygenase CPUR_05419. CPUR_05425, CPUR_05426 and CPUR_05431 are unique to Claviceps, thus it is likely that they are involved in further modification of xanthone units or in their dimerization. The yellow ergochromes and the red anthraquinone pigments endocrocin and clavorubin are products from the same PKS derived precursors and the latter are likely shunt products in the pathway of xanthone biosynthesis. It is proposed that atrochrysone carboxylic acid released from the PKS CPUR_05437 can also be converted to endocrocin anthrone which is further oxidized into endocrocin by CPUR_05435. Endocrocin could be then modified to clavorubin, possibly by CPUR_05423 and CPUR_05431. Clavorubin is the principal anthraquinone metabolite produced by the cluster with a much higher yield compared to endocrocin. In Claviceps purpurea (strain 20.1) (Ergot fungus), this protein is Methyltransferase CPUR_05424.